Here is a 228-residue protein sequence, read N- to C-terminus: Peptide deformylase (228 aa).

2 disordered regions span residues Met1–Val28 and Gly116–Arg138. Polar residues-rich tracts occupy residues Thr8–Ser18 and Asn123–Cys133. Positions 141 and 183 each coordinate Fe cation. The active site involves Glu184. A Fe cation-binding site is contributed by His187.

Belongs to the polypeptide deformylase family. The cofactor is Fe(2+).

It catalyses the reaction N-terminal N-formyl-L-methionyl-[peptide] + H2O = N-terminal L-methionyl-[peptide] + formate. Removes the formyl group from the N-terminal Met of newly synthesized proteins. Requires at least a dipeptide for an efficient rate of reaction. N-terminal L-methionine is a prerequisite for activity but the enzyme has broad specificity at other positions. The protein is Peptide deformylase of Tropheryma whipplei (strain Twist) (Whipple's bacillus).